We begin with the raw amino-acid sequence, 373 residues long: Stationary phase protein 5 (373 aa).

Its function is as follows. Required for survival at high temperature during stationary phase. This is Stationary phase protein 5 (SPG5) from Saccharomyces cerevisiae (strain ATCC 204508 / S288c) (Baker's yeast).